The chain runs to 766 residues: MVVTRSARPQARNEATSVESLRQKNSAVTRLHVHPKGRKGSSPDNPNTTESQTTPERSPAPKTRKSGTTGSLPEMNKPATDGEISEAESDCSSVPEVQDPVFRVTRRRQILVAGTPVSSVRKRLKITRVSESHTEEVVSEADSHVSGISRIMPPTEITTRRSKAKSQREPKQESHVEVISDAESSCSDISFSGIATRRTTRSMQRKLQAQTEENNTKIVLENEKEIIHTPVNLEDSVNRRTSRLLARSLSQINKPNFSNNEIYNDPDDSFFGISGKKLAVKKTRNFTIREEKQDSISPLKEITKQNCKSLDEEAKKIIDGGKEGNEKNSQLNLSEFQDTGLQQLVSQRHSTPESDKTTSESSTLNHEAVMKSLAQTFAVVEMDRWNEERKNAIKTSDCSEPGDGSYSDSDEECTVIGVSEDMSKEKEVDSESDTKPSNLEFNTTQDKDDSVLLVLSSDESQQSEHSENEEDTVCFVENNGNKESLNGDSENLSHDNALFVIDTTPGLSADKNFYLDEEDKAGEVATEEEEEEEEEESEEELSDHDRNKDNEFSDEDNLLSNTKSKLLKLMSSSIDTGLNIKELGGLYINFNADKVQLNKRTLTQMKEKRKDELLQKTVITPEFEKNYCVPPYSESKYKLQKKRRQERQKTAGDGWFGMKAPELTDELKNDLKALKMRASMDPKRFYKKNDRDGFPKYFQIGTIVDNPADFYHSRVPKKQRKRTIVEELLADSEFRRYNRRKYSEIMAEKAANAAGKKFRKKKKFRN.

The interval 1–99 (MVVTRSARPQ…DCSSVPEVQD (99 aa)) is disordered. Composition is skewed to polar residues over residues 13–28 (NEAT…NSAV) and 42–56 (SPDN…TTPE). Residue threonine 127 is modified to Phosphothreonine. A phosphoserine mark is found at serine 139, serine 143, and serine 146. The segment at 155-175 (TEITTRRSKAKSQREPKQESH) is disordered. The segment covering 166-175 (SQREPKQESH) has biased composition (basic and acidic residues). 2 positions are modified to phosphoserine: serine 180 and serine 190. A Glycyl lysine isopeptide (Lys-Gly) (interchain with G-Cter in SUMO2) cross-link involves residue lysine 217. Phosphothreonine is present on threonine 229. Residues serine 236, serine 248, and serine 250 each carry the phosphoserine modification. Residue lysine 254 forms a Glycyl lysine isopeptide (Lys-Gly) (interchain with G-Cter in SUMO2) linkage. Serine 258 carries the phosphoserine modification. Lysine 327 is covalently cross-linked (Glycyl lysine isopeptide (Lys-Gly) (interchain with G-Cter in SUMO2)). Serine 334 carries the post-translational modification Phosphoserine. 3 disordered regions span residues 345 to 367 (VSQR…LNHE), 390 to 450 (KNAI…KDDS), and 520 to 557 (KAGE…DEDN). Lysine 394 is covalently cross-linked (Glycyl lysine isopeptide (Lys-Gly) (interchain with G-Cter in SUMO2)). The segment covering 421–434 (DMSKEKEVDSESDT) has biased composition (basic and acidic residues). Positions 435–444 (KPSNLEFNTT) are enriched in polar residues. A coiled-coil region spans residues 515-552 (LDEEDKAGEVATEEEEEEEEEESEEELSDHDRNKDNEF). A compositionally biased stretch (acidic residues) spans 520 to 542 (KAGEVATEEEEEEEEEESEEELS). Positions 558–615 (LLSNTKSKLLKLMSSSIDTGLNIKELGGLYINFNADKVQLNKRTLTQMKEKRKDELLQ) are tdBR region; mediates interaction with DNTT. Glycyl lysine isopeptide (Lys-Gly) (interchain with G-Cter in SUMO2) cross-links involve residues lysine 568, lysine 594, and lysine 616. Residue threonine 620 is modified to Phosphothreonine. Glycyl lysine isopeptide (Lys-Gly) (interchain with G-Cter in SUMO2) cross-links involve residues lysine 636, lysine 659, lysine 668, lysine 696, and lysine 741.

As to quaternary structure, forms a ternary complex with DNTT and core histone; interaction with PCNA releases DNTT and H2A/H2B histones from this ternary complex. Interacts with ESR1, ESR2, PPARG and RXRA. Part of the small subunit (SSU) processome, composed of more than 70 proteins and the RNA chaperone small nucleolar RNA (snoRNA) U3.

It localises to the nucleus. Its subcellular location is the nucleolus. Regulates the transcriptional activity of DNTT and ESR1. May function as a chromatin remodeling protein. Part of the small subunit (SSU) processome, first precursor of the small eukaryotic ribosomal subunit. During the assembly of the SSU processome in the nucleolus, many ribosome biogenesis factors, an RNA chaperone and ribosomal proteins associate with the nascent pre-rRNA and work in concert to generate RNA folding, modifications, rearrangements and cleavage as well as targeted degradation of pre-ribosomal RNA by the RNA exosome. The protein is Deoxynucleotidyltransferase terminal-interacting protein 2 (DNTTIP2) of Bos taurus (Bovine).